We begin with the raw amino-acid sequence, 186 residues long: Phosphoprotein p30 (186 aa).

Belongs to the asfivirus phosphoprotein p30 family. In terms of assembly, oligomer. Interacts with host HNRNPK.

It localises to the host cytoplasm. The protein resides in the host nucleus. It is found in the virion. Modifies the subcellular distribution of heterogeneous nuclear ribonucleoprotein K (HNRNPK) and may contribute to modulate HNRNPK functions related to processing and export of mRNAs during ASFV infection. Necessary for virus internalization. The protein is Phosphoprotein p30 of Ornithodoros (relapsing fever ticks).